Here is a 139-residue protein sequence, read N- to C-terminus: Large ribosomal subunit protein uL16 (139 aa).

The protein belongs to the universal ribosomal protein uL16 family. As to quaternary structure, part of the 50S ribosomal subunit.

Binds 23S rRNA and is also seen to make contacts with the A and possibly P site tRNAs. The polypeptide is Large ribosomal subunit protein uL16 (Rippkaea orientalis (strain PCC 8801 / RF-1) (Cyanothece sp. (strain PCC 8801))).